An 85-amino-acid polypeptide reads, in one-letter code: Large ribosomal subunit protein bL27 (85 aa).

Residues 1 to 23 (MAHKKAGGSSRNGRDSESKRLGV) are disordered.

The protein belongs to the bacterial ribosomal protein bL27 family.

The chain is Large ribosomal subunit protein bL27 from Methylococcus capsulatus (strain ATCC 33009 / NCIMB 11132 / Bath).